The following is a 569-amino-acid chain: Protein angel homolog 2 (569 aa).

3 disordered regions span residues 1–22 (MRKG…GVSP), 63–92 (LQHP…WSSW), and 109–155 (GLME…WLRN). Residues 63-72 (LQHPSSSFST) are compositionally biased toward polar residues. A compositionally biased stretch (low complexity) spans 139–150 (PPKGSRSPKGSP).

It belongs to the CCR4/nocturin family.

The chain is Protein angel homolog 2 (angel2) from Danio rerio (Zebrafish).